The following is a 262-amino-acid chain: Hydroxyethylthiazole kinase (262 aa).

Met43 is a binding site for substrate. Positions 118 and 164 each coordinate ATP. Substrate is bound at residue Ala191.

It belongs to the Thz kinase family. The cofactor is Mg(2+).

The catalysed reaction is 5-(2-hydroxyethyl)-4-methylthiazole + ATP = 4-methyl-5-(2-phosphooxyethyl)-thiazole + ADP + H(+). It functions in the pathway cofactor biosynthesis; thiamine diphosphate biosynthesis; 4-methyl-5-(2-phosphoethyl)-thiazole from 5-(2-hydroxyethyl)-4-methylthiazole: step 1/1. Catalyzes the phosphorylation of the hydroxyl group of 4-methyl-5-beta-hydroxyethylthiazole (THZ). In Cereibacter sphaeroides (strain KD131 / KCTC 12085) (Rhodobacter sphaeroides), this protein is Hydroxyethylthiazole kinase.